Consider the following 66-residue polypeptide: Sodium/potassium-transporting ATPase subunit gamma (66 aa).

Residues 29–46 (GGLIFAGLAFVVGLLILL) form a helical membrane-spanning segment.

Belongs to the FXYD family. In terms of assembly, regulatory subunit of the sodium/potassium-transporting ATPase which is composed of a catalytic alpha subunit, an auxiliary non-catalytic beta subunit and an additional regulatory subunit. Highest levels expressed in the kidney and spleen. Restricted to the basolateral membrane in renal epithelial cells and varies in its level of expression along the nephron.

It localises to the membrane. Functionally, may be involved in forming the receptor site for cardiac glycoside binding or may modulate the transport function of the sodium ATPase. In Rattus norvegicus (Rat), this protein is Sodium/potassium-transporting ATPase subunit gamma (Fxyd2).